A 473-amino-acid chain; its full sequence is FAD-dependent monooxygeanse terM (473 aa).

The N-terminal stretch at 1-22 (MSENFKVLIIGGSVAGLTLALC) is a signal peptide. Residues glutamate 34, glycine 48, arginine 107, aspartate 303, and alanine 316 each coordinate FAD. Residues 441–461 (VLYLICGALLAWWASGLVWHF) form a helical membrane-spanning segment.

This sequence belongs to the paxM FAD-dependent monooxygenase family. FAD serves as cofactor.

It localises to the membrane. Its pathway is secondary metabolite biosynthesis. FAD-dependent monooxygeanse; part of the gene cluster that mediates the biosynthesis of terpendoles, indole-diterpene (IDT) mycotoxins including terpendole I, terpendole K, terpendole C, as well as the kinesin Eg5 inhibitor terpendole E. Terpendoles biosynthesis begins with the synthesis of geranylgeranyl diphosphate (GGPP) by a yet unidentified GGPP synthase. Condensation of indole-3-glycerol phosphate with GGPP by the prenyltransferase terC then forms 3-geranylgeranylindole (3-GGI), followed by epoxidation and cyclization of this intermediate (by the FAD-dependent monooxygeanse terM and the terpene cyclase terB) to form paspaline. The cytochrome monooxygenase terQ then hydroxylates paspalline at C-11 to yield terpendole E. The cytochrome monooxygenase terP converts terpendole E to 13-desoxyterpendole I, and terQ converts 13-desoxyterpendole I into terpendole I. TerF and terK are required for conversion of terpendole I to terpendole C which is further converted to terpendole K. The chain is FAD-dependent monooxygeanse terM from Tolypocladium album (Soil fungus).